The primary structure comprises 266 residues: Diphthine synthase (266 aa).

Residues L9, D84, V87, S112–I113, L169, A210, and H235 contribute to the S-adenosyl-L-methionine site.

The protein belongs to the diphthine synthase family. As to quaternary structure, homodimer.

The enzyme catalyses 2-[(3S)-amino-3-carboxypropyl]-L-histidyl-[translation elongation factor 2] + 3 S-adenosyl-L-methionine = diphthine-[translation elongation factor 2] + 3 S-adenosyl-L-homocysteine + 3 H(+). It participates in protein modification; peptidyl-diphthamide biosynthesis. S-adenosyl-L-methionine-dependent methyltransferase that catalyzes the trimethylation of the amino group of the modified target histidine residue in translation elongation factor 2 (EF-2), to form an intermediate called diphthine. The three successive methylation reactions represent the second step of diphthamide biosynthesis. The chain is Diphthine synthase from Methanosarcina acetivorans (strain ATCC 35395 / DSM 2834 / JCM 12185 / C2A).